Reading from the N-terminus, the 211-residue chain is Thymidylate kinase (211 aa).

10-17 (GGDGVGKS) is a binding site for ATP.

Belongs to the thymidylate kinase family.

The enzyme catalyses dTMP + ATP = dTDP + ADP. Phosphorylation of dTMP to form dTDP in both de novo and salvage pathways of dTTP synthesis. In Clavibacter michiganensis subsp. michiganensis (strain NCPPB 382), this protein is Thymidylate kinase.